A 341-amino-acid polypeptide reads, in one-letter code: Phenylalanine--tRNA ligase alpha subunit (341 aa).

Glu254 is a Mg(2+) binding site.

Belongs to the class-II aminoacyl-tRNA synthetase family. Phe-tRNA synthetase alpha subunit type 1 subfamily. Tetramer of two alpha and two beta subunits. Requires Mg(2+) as cofactor.

The protein resides in the cytoplasm. The enzyme catalyses tRNA(Phe) + L-phenylalanine + ATP = L-phenylalanyl-tRNA(Phe) + AMP + diphosphate + H(+). This is Phenylalanine--tRNA ligase alpha subunit from Chlorobium limicola (strain DSM 245 / NBRC 103803 / 6330).